Consider the following 170-residue polypeptide: Adenine phosphoribosyltransferase (170 aa).

Belongs to the purine/pyrimidine phosphoribosyltransferase family. In terms of assembly, homodimer.

The protein localises to the cytoplasm. The enzyme catalyses AMP + diphosphate = 5-phospho-alpha-D-ribose 1-diphosphate + adenine. It participates in purine metabolism; AMP biosynthesis via salvage pathway; AMP from adenine: step 1/1. Its function is as follows. Catalyzes a salvage reaction resulting in the formation of AMP, that is energically less costly than de novo synthesis. The protein is Adenine phosphoribosyltransferase of Geobacillus kaustophilus (strain HTA426).